We begin with the raw amino-acid sequence, 405 residues long: MTKNSSTVFTHARIATLEEKAANLGLIEEAALVVKDARIVYAGPENKLPGEYASFEKIDCGNRLITPGLIDCHTHLVHAGNRAHEFELRLQGATYEEVARAGGGIVSSVRNLRAASEDDLVRETLPRLDALIAEGVTTVEVKSGYGLDRDSEIKSLKAARRLGEERDVAIRTTFLGAHALPPEMNGDKAAYIDRVINDMLPAIAEQGLADAVDGFCEGIAFLPDEIARVFDAAKAHDIPVKLHADQLSNLHGAALAASYGALSADHLEYTDADGAAAMASAGTVAVLLPGAYYFIRETQKPPVEAFRAAGTKMALATDNNPGTSPLTSLLLTMNMGATLFRMTVEECIAGVTREAARALGILDQTGTLEIGKDADLAIWDIERPAELVYRIGFNPLWKRVFKGQI.

Fe(3+) contacts are provided by histidine 73 and histidine 75. Positions 73 and 75 each coordinate Zn(2+). Residues arginine 82, tyrosine 145, and histidine 178 each contribute to the 4-imidazolone-5-propanoate site. Tyrosine 145 is a binding site for N-formimidoyl-L-glutamate. Histidine 243 provides a ligand contact to Fe(3+). Histidine 243 provides a ligand contact to Zn(2+). Residue glutamine 246 participates in 4-imidazolone-5-propanoate binding. Fe(3+) is bound at residue aspartate 318. Aspartate 318 contributes to the Zn(2+) binding site. Residues asparagine 320 and glycine 322 each contribute to the N-formimidoyl-L-glutamate site. A 4-imidazolone-5-propanoate-binding site is contributed by threonine 323.

Belongs to the metallo-dependent hydrolases superfamily. HutI family. Requires Zn(2+) as cofactor. The cofactor is Fe(3+).

Its subcellular location is the cytoplasm. The catalysed reaction is 4-imidazolone-5-propanoate + H2O = N-formimidoyl-L-glutamate. It participates in amino-acid degradation; L-histidine degradation into L-glutamate; N-formimidoyl-L-glutamate from L-histidine: step 3/3. Catalyzes the hydrolytic cleavage of the carbon-nitrogen bond in imidazolone-5-propanoate to yield N-formimidoyl-L-glutamate. It is the third step in the universal histidine degradation pathway. This is Imidazolonepropionase from Brucella suis (strain ATCC 23445 / NCTC 10510).